Reading from the N-terminus, the 306-residue chain is Glutathione transport system permease protein GsiC (306 aa).

Residues 1 to 8 (MLNYVLKR) lie on the Cytoplasmic side of the membrane. A helical membrane pass occupies residues 9–29 (LLGLIPTLLIVAVLVFLFVHL). Residues 30-102 (LPGDPARLIA…SRFLPTLWLT (73 aa)) lie on the Periplasmic side of the membrane. The ABC transmembrane type-1 domain maps to 95–292 (FLPTLWLTIT…LEFILINLVV (198 aa)). A helical transmembrane segment spans residues 103 to 123 (ITSMIWAVLFGMAIGIAAAVW). At 124 to 134 (RNRWPDRLGMT) the chain is on the cytoplasmic side. The chain crosses the membrane as a helical span at residues 135 to 155 (LAVTGISFPAFALGMLLMQIF). Topologically, residues 156–168 (SVDLGWLPTVGAD) are periplasmic. The chain crosses the membrane as a helical span at residues 169-189 (SWQHYILPSLTLGAAVASVMA). At 190–228 (RFTRSSFVDVLSEDYMRTARAKGVSETWVVLKHGLRNAM) the chain is on the cytoplasmic side. The helical transmembrane segment at 229–249 (IPVVTMMGLQFGFLLGGSIVV) threads the bilayer. Residues 250–278 (EKVFNWPGLGRLLVDSVDMRDYPVIQAEV) lie on the Periplasmic side of the membrane. Residues 279–299 (LLFSLEFILINLVVDVLYAAI) traverse the membrane as a helical segment. At 300–306 (NPAIRYK) the chain is on the cytoplasmic side.

This sequence belongs to the binding-protein-dependent transport system permease family. In terms of assembly, the complex is composed of two ATP-binding proteins (GsiA), two transmembrane proteins (GsiC and GsiD) and a solute-binding protein (GsiB).

It is found in the cell inner membrane. Its function is as follows. Part of the ABC transporter complex GsiABCD involved in glutathione import. Probably responsible for the translocation of the substrate across the membrane. This Salmonella typhimurium (strain LT2 / SGSC1412 / ATCC 700720) protein is Glutathione transport system permease protein GsiC.